The primary structure comprises 100 residues: Large ribosomal subunit protein bL21 (100 aa).

It belongs to the bacterial ribosomal protein bL21 family. In terms of assembly, part of the 50S ribosomal subunit. Contacts protein L20.

Functionally, this protein binds to 23S rRNA in the presence of protein L20. In Mycoplasma pneumoniae (strain ATCC 29342 / M129 / Subtype 1) (Mycoplasmoides pneumoniae), this protein is Large ribosomal subunit protein bL21.